Here is a 714-residue protein sequence, read N- to C-terminus: Fatty acid oxidation complex subunit alpha (714 aa).

Positions 1-190 (MEMTSAFTLN…KLGLVDDVVP (190 aa)) are enoyl-CoA hydratase. The tract at residues 306 to 714 (APLNSVGILG…FWKTTATDLQ (409 aa)) is 3-hydroxyacyl-CoA dehydrogenase.

In the N-terminal section; belongs to the enoyl-CoA hydratase/isomerase family. The protein in the central section; belongs to the 3-hydroxyacyl-CoA dehydrogenase family. As to quaternary structure, heterotetramer of two alpha chains (FadJ) and two beta chains (FadI).

The protein localises to the cytoplasm. It carries out the reaction a (3S)-3-hydroxyacyl-CoA = a (2E)-enoyl-CoA + H2O. The enzyme catalyses a 4-saturated-(3S)-3-hydroxyacyl-CoA = a (3E)-enoyl-CoA + H2O. The catalysed reaction is a (3S)-3-hydroxyacyl-CoA + NAD(+) = a 3-oxoacyl-CoA + NADH + H(+). It catalyses the reaction (3S)-3-hydroxybutanoyl-CoA = (3R)-3-hydroxybutanoyl-CoA. It participates in lipid metabolism; fatty acid beta-oxidation. Its function is as follows. Catalyzes the formation of a hydroxyacyl-CoA by addition of water on enoyl-CoA. Also exhibits 3-hydroxyacyl-CoA epimerase and 3-hydroxyacyl-CoA dehydrogenase activities. This is Fatty acid oxidation complex subunit alpha from Escherichia coli (strain 55989 / EAEC).